The primary structure comprises 420 residues: Tryptophan synthase beta chain (420 aa).

Lysine 112 bears the N6-(pyridoxal phosphate)lysine mark.

It belongs to the TrpB family. As to quaternary structure, tetramer of two alpha and two beta chains. Requires pyridoxal 5'-phosphate as cofactor.

It carries out the reaction (1S,2R)-1-C-(indol-3-yl)glycerol 3-phosphate + L-serine = D-glyceraldehyde 3-phosphate + L-tryptophan + H2O. Its pathway is amino-acid biosynthesis; L-tryptophan biosynthesis; L-tryptophan from chorismate: step 5/5. The beta subunit is responsible for the synthesis of L-tryptophan from indole and L-serine. In Thermosipho africanus (strain TCF52B), this protein is Tryptophan synthase beta chain.